Here is a 263-residue protein sequence, read N- to C-terminus: tRNA pseudouridine synthase A (263 aa).

Asp-51 functions as the Nucleophile in the catalytic mechanism. A substrate-binding site is contributed by Tyr-106.

The protein belongs to the tRNA pseudouridine synthase TruA family.

It catalyses the reaction uridine(38/39/40) in tRNA = pseudouridine(38/39/40) in tRNA. Formation of pseudouridine at positions 38, 39 and 40 in the anticodon stem and loop of transfer RNAs. This chain is tRNA pseudouridine synthase A, found in Pyrococcus abyssi (strain GE5 / Orsay).